The sequence spans 483 residues: Probable glycine dehydrogenase (decarboxylating) subunit 2 (483 aa).

A disordered region spans residues 1 to 33 (MLIFEHSRKNRRNYSQAPATRPAKNNIPDHLKR). Lys264 carries the post-translational modification N6-(pyridoxal phosphate)lysine.

The protein belongs to the GcvP family. C-terminal subunit subfamily. In terms of assembly, the glycine cleavage system is composed of four proteins: P, T, L and H. In this organism, the P 'protein' is a heterodimer of two subunits. It depends on pyridoxal 5'-phosphate as a cofactor.

The enzyme catalyses N(6)-[(R)-lipoyl]-L-lysyl-[glycine-cleavage complex H protein] + glycine + H(+) = N(6)-[(R)-S(8)-aminomethyldihydrolipoyl]-L-lysyl-[glycine-cleavage complex H protein] + CO2. In terms of biological role, the glycine cleavage system catalyzes the degradation of glycine. The P protein binds the alpha-amino group of glycine through its pyridoxal phosphate cofactor; CO(2) is released and the remaining methylamine moiety is then transferred to the lipoamide cofactor of the H protein. This chain is Probable glycine dehydrogenase (decarboxylating) subunit 2, found in Nitrosomonas europaea (strain ATCC 19718 / CIP 103999 / KCTC 2705 / NBRC 14298).